Reading from the N-terminus, the 137-residue chain is Gonadotropin subunit beta-1 (137 aa).

An N-terminal signal peptide occupies residues 1–24 (MYCTHLMTLQLVVMAMLWVTPVRA). 5 disulfides stabilise this stretch: cysteine 32-cysteine 78, cysteine 46-cysteine 93, cysteine 55-cysteine 108, cysteine 59-cysteine 110, and cysteine 113-cysteine 120. N-linked (GlcNAc...) asparagine glycosylation is present at asparagine 36.

It belongs to the glycoprotein hormones subunit beta family. Heterodimer of an alpha and a beta chain.

Its subcellular location is the secreted. Involved in gametogenesis and steroidogenesis. This Oncorhynchus keta (Chum salmon) protein is Gonadotropin subunit beta-1 (cgba).